A 424-amino-acid polypeptide reads, in one-letter code: Glutamyl-tRNA reductase (424 aa).

Residues Thr-51–Arg-54, Ser-99, Glu-104–Gln-106, and Gln-110 each bind substrate. Catalysis depends on Cys-52, which acts as the Nucleophile. Gly-179–Gly-184 lines the NADP(+) pocket.

The protein belongs to the glutamyl-tRNA reductase family. In terms of assembly, homodimer.

It catalyses the reaction (S)-4-amino-5-oxopentanoate + tRNA(Glu) + NADP(+) = L-glutamyl-tRNA(Glu) + NADPH + H(+). It participates in porphyrin-containing compound metabolism; protoporphyrin-IX biosynthesis; 5-aminolevulinate from L-glutamyl-tRNA(Glu): step 1/2. Its function is as follows. Catalyzes the NADPH-dependent reduction of glutamyl-tRNA(Glu) to glutamate 1-semialdehyde (GSA). The protein is Glutamyl-tRNA reductase of Methanospirillum hungatei JF-1 (strain ATCC 27890 / DSM 864 / NBRC 100397 / JF-1).